The chain runs to 165 residues: Disulfide bond formation protein B (165 aa).

Residues 1 to 11 lie on the Cytoplasmic side of the membrane; it reads MICSKVPVRAW. Residues 12-28 form a helical membrane-spanning segment; that stretch reads FATLGLGCLGLVAVGMA. The Periplasmic portion of the chain corresponds to 29–46; the sequence is LQTLLHLAPCPLCIFQRL. Residues Cys-38 and Cys-41 are joined by a disulfide bond. The helical transmembrane segment at 47-61 threads the bilayer; that stretch reads LYIMIGFVGLLGFVL. Topologically, residues 62-66 are cytoplasmic; it reads PAGRL. Residues 67–84 form a helical membrane-spanning segment; it reads LWSTLAAGLGVLGFGVAA. At 85–142 the chain is on the periplasmic side; sequence YQTWMQAFPDLAPECGFTDPNAIERLVDWLGMEWPSMFLATGFCTSRDWELLGLSMAN. Cys-99 and Cys-128 form a disulfide bridge. A helical transmembrane segment spans residues 143 to 161; that stretch reads WSVLIFAGIVAYAVLLFVR. Residues 162–165 are Cytoplasmic-facing; that stretch reads KDRA.

This sequence belongs to the DsbB family.

The protein resides in the cell inner membrane. Functionally, required for disulfide bond formation in some periplasmic proteins. Acts by oxidizing the DsbA protein. This Dechloromonas aromatica (strain RCB) protein is Disulfide bond formation protein B.